The sequence spans 984 residues: Probable beta-galactosidase C (984 aa).

The first 23 residues, 1 to 23 (MRLLSFIYLVWLALLTGTPQVSA), serve as a signal peptide directing secretion. Residues Tyr-82, Asn-127, Ala-128, Glu-129, and Asn-187 each coordinate substrate. Glu-188 (proton donor) is an active-site residue. An N-linked (GlcNAc...) asparagine glycan is attached at Asn-197. Tyr-251 serves as a coordination point for substrate. A disulfide bridge connects residues Cys-257 and Cys-304. Residue Asn-276 is glycosylated (N-linked (GlcNAc...) asparagine). Glu-287 (nucleophile) is an active-site residue. Residue Tyr-353 coordinates substrate. 10 N-linked (GlcNAc...) asparagine glycosylation sites follow: Asn-391, Asn-421, Asn-434, Asn-517, Asn-602, Asn-677, Asn-715, Asn-720, Asn-759, and Asn-805.

The protein belongs to the glycosyl hydrolase 35 family.

The protein resides in the secreted. The catalysed reaction is Hydrolysis of terminal non-reducing beta-D-galactose residues in beta-D-galactosides.. In terms of biological role, cleaves beta-linked terminal galactosyl residues from gangliosides, glycoproteins, and glycosaminoglycans. This chain is Probable beta-galactosidase C (lacC), found in Aspergillus flavus (strain ATCC 200026 / FGSC A1120 / IAM 13836 / NRRL 3357 / JCM 12722 / SRRC 167).